The sequence spans 2417 residues: Protein pad-1 (2417 aa).

Disordered regions lie at residues 409–437, 449–475, 994–1029, and 1957–2032; these read SSNS…DREG, SNKD…PDEE, TSTG…DDDT, and SMSN…RRDP. 2 stretches are compositionally biased toward low complexity: residues 456 to 468 and 1002 to 1024; these read TSVT…NASS and DPSA…VVPA. Residues 1969–1982 are compositionally biased toward polar residues; sequence DNPSGSTRNSTLSL. The segment covering 2003–2014 has biased composition (basic and acidic residues); it reads SKSENMKIEKKS. A compositionally biased stretch (polar residues) spans 2015-2025; that stretch reads SSNLRASIKDT.

This sequence belongs to the DOP1 family.

Functionally, may be involved in protein traffic between late Golgi and early endosomes. Essential for cell patterning during gastrulation. This is Protein pad-1 (pad-1) from Caenorhabditis elegans.